We begin with the raw amino-acid sequence, 637 residues long: 1-deoxy-D-xylulose-5-phosphate synthase (637 aa).

Thiamine diphosphate is bound by residues H76 and 117–119 (GHS). D148 contacts Mg(2+). Thiamine diphosphate-binding positions include 149–150 (GA), N177, Y294, and E381. Mg(2+) is bound at residue N177.

The protein belongs to the transketolase family. DXPS subfamily. In terms of assembly, homodimer. The cofactor is Mg(2+). Requires thiamine diphosphate as cofactor.

It catalyses the reaction D-glyceraldehyde 3-phosphate + pyruvate + H(+) = 1-deoxy-D-xylulose 5-phosphate + CO2. Its pathway is metabolic intermediate biosynthesis; 1-deoxy-D-xylulose 5-phosphate biosynthesis; 1-deoxy-D-xylulose 5-phosphate from D-glyceraldehyde 3-phosphate and pyruvate: step 1/1. In terms of biological role, catalyzes the acyloin condensation reaction between C atoms 2 and 3 of pyruvate and glyceraldehyde 3-phosphate to yield 1-deoxy-D-xylulose-5-phosphate (DXP). The sequence is that of 1-deoxy-D-xylulose-5-phosphate synthase from Neisseria meningitidis serogroup C / serotype 2a (strain ATCC 700532 / DSM 15464 / FAM18).